The primary structure comprises 781 residues: Ubiquitin carboxyl-terminal hydrolase 14 (781 aa).

Residues 169-279 form a UBP-type zinc finger; that stretch reads STCPHTENFQ…SALQIYGINI (111 aa). Positions 171, 173, 192, 195, 204, 207, 212, 224, 228, 235, 253, and 256 each coordinate Zn(2+). The USP domain occupies 323-781; it reads CGLINLGNSC…NGYIYFYTRC (459 aa). Cysteine 332 (nucleophile) is an active-site residue. 2 consecutive UBA domains span residues 576-626 and 649-689; these read DEDE…LFQH and EVDE…VFNN. Histidine 737 acts as the Proton acceptor in catalysis.

It belongs to the peptidase C19 family.

It is found in the cytoplasm. Its subcellular location is the nucleus. It catalyses the reaction Thiol-dependent hydrolysis of ester, thioester, amide, peptide and isopeptide bonds formed by the C-terminal Gly of ubiquitin (a 76-residue protein attached to proteins as an intracellular targeting signal).. Functionally, required for the adaptation to the presence of glucose in the growth medium; mediates the degradation of enzymes involved in gluconeogenesis when cells are shifted to glucose-containing medium. Required for proteasome-dependent catabolite degradation of fructose-1,6-bisphosphatase (FBP1). Accelerates proteasomal breakdown of ubiquitinated proteins as it disassembles free ubiquitin chains that would compete with ubiquitinated proteins to bind to the proteasome. The sequence is that of Ubiquitin carboxyl-terminal hydrolase 14 (UBP14) from Saccharomyces cerevisiae (strain ATCC 204508 / S288c) (Baker's yeast).